The primary structure comprises 419 residues: UPF0242 protein TC_0906 (419 aa).

The protein belongs to the UPF0242 family.

The chain is UPF0242 protein TC_0906 from Chlamydia muridarum (strain MoPn / Nigg).